A 125-amino-acid polypeptide reads, in one-letter code: Ribonuclease P protein component (125 aa).

It belongs to the RnpA family. As to quaternary structure, consists of a catalytic RNA component (M1 or rnpB) and a protein subunit.

The enzyme catalyses Endonucleolytic cleavage of RNA, removing 5'-extranucleotides from tRNA precursor.. Functionally, RNaseP catalyzes the removal of the 5'-leader sequence from pre-tRNA to produce the mature 5'-terminus. It can also cleave other RNA substrates such as 4.5S RNA. The protein component plays an auxiliary but essential role in vivo by binding to the 5'-leader sequence and broadening the substrate specificity of the ribozyme. The polypeptide is Ribonuclease P protein component (Rhodococcus jostii (strain RHA1)).